Here is a 473-residue protein sequence, read N- to C-terminus: GDP-fucose protein O-fucosyltransferase 2 (473 aa).

The signal sequence occupies residues 1-25; it reads MKNMIYNLISISLYSLIIILTDIYA. GDP-beta-L-fucose-binding positions include 59 to 63, 283 to 285, and 379 to 380; these read GEGFN, HLR, and RF. Glutamate 60 (proton acceptor) is an active-site residue.

The protein belongs to the glycosyltransferase 68 family.

Its subcellular location is the endoplasmic reticulum. It catalyses the reaction L-seryl-[protein] + GDP-beta-L-fucose = 3-O-(alpha-L-fucosyl)-L-seryl-[protein] + GDP + H(+). The enzyme catalyses L-threonyl-[protein] + GDP-beta-L-fucose = 3-O-(alpha-L-fucosyl)-L-threonyl-[protein] + GDP + H(+). The protein operates within protein modification; protein glycosylation. In terms of biological role, catalyzes the reaction that attaches fucose through an O-glycosidic linkage to a conserved serine or threonine residue in the consensus sequence C1-X-X-S/T-C2 of thrombospondin type I repeats (TSRs) where C1 and C2 are the first and second cysteines of the repeat, respectively. O-fucosylates sporozoite proteins CSP and TRAP. O-fucosylation regulates stability and intracellular trafficking of TRAP but not of CSP. Dispensable for parasite transmission to the mosquito vector and/or infection of the vertebrate host hepatocytes. The sequence is that of GDP-fucose protein O-fucosyltransferase 2 from Plasmodium berghei (strain Anka).